The sequence spans 76 residues: MKLTCVMIVAVLFLTANTFATADDPRNGLRDLFSIAHHEMKNPEASKLNEKCYGFGEACLVLYTDCCGYCVLAVCL.

A signal peptide spans 1-22 (MKLTCVMIVAVLFLTANTFATA). The propeptide occupies 23–50 (DDPRNGLRDLFSIAHHEMKNPEASKLNE). Intrachain disulfides connect C52–C66, C59–C70, and C67–C75.

This sequence belongs to the conotoxin O1 superfamily. As to expression, expressed by the venom duct.

Its subcellular location is the secreted. The polypeptide is Conotoxin Vc6.3 (Conus victoriae (Queen Victoria cone)).